The primary structure comprises 207 residues: N-(5'-phosphoribosyl)anthranilate isomerase (207 aa).

Belongs to the TrpF family.

It catalyses the reaction N-(5-phospho-beta-D-ribosyl)anthranilate = 1-(2-carboxyphenylamino)-1-deoxy-D-ribulose 5-phosphate. Its pathway is amino-acid biosynthesis; L-tryptophan biosynthesis; L-tryptophan from chorismate: step 3/5. The sequence is that of N-(5'-phosphoribosyl)anthranilate isomerase from Legionella pneumophila (strain Paris).